The sequence spans 427 residues: Peptidase B (427 aa).

Residues lysine 195 and aspartate 200 each coordinate Mn(2+). Residue lysine 207 is part of the active site. Mn(2+)-binding residues include aspartate 218, aspartate 277, and glutamate 279. Arginine 281 is a catalytic residue.

The protein belongs to the peptidase M17 family. In terms of assembly, homohexamer. Mn(2+) serves as cofactor.

It is found in the cytoplasm. The catalysed reaction is Release of an N-terminal amino acid, Xaa, from a peptide or arylamide. Xaa is preferably Glu or Asp but may be other amino acids, including Leu, Met, His, Cys and Gln.. Functionally, probably plays an important role in intracellular peptide degradation. This Salmonella arizonae (strain ATCC BAA-731 / CDC346-86 / RSK2980) protein is Peptidase B.